Reading from the N-terminus, the 378-residue chain is Probable S-(hydroxymethyl)glutathione dehydrogenase 1 (378 aa).

Cysteine 47 contributes to the Zn(2+) binding site. An NAD(+)-binding site is contributed by histidine 48. 7 residues coordinate Zn(2+): histidine 69, glutamate 70, cysteine 99, cysteine 102, cysteine 105, cysteine 113, and cysteine 176. NAD(+)-binding positions include 201–206 (GCGCVG), aspartate 225, 293–295 (IGV), and 318–320 (SAF).

This sequence belongs to the zinc-containing alcohol dehydrogenase family. Class-III subfamily. Zn(2+) is required as a cofactor.

It catalyses the reaction a primary alcohol + NAD(+) = an aldehyde + NADH + H(+). The catalysed reaction is a secondary alcohol + NAD(+) = a ketone + NADH + H(+). The enzyme catalyses S-(hydroxymethyl)glutathione + NADP(+) = S-formylglutathione + NADPH + H(+). It carries out the reaction S-(hydroxymethyl)glutathione + NAD(+) = S-formylglutathione + NADH + H(+). It catalyses the reaction S-nitrosoglutathione + NADH + H(+) = S-(hydroxysulfenamide)glutathione + NAD(+). Its function is as follows. Oxidizes long-chain alcohols and, in the presence of glutathione, is able to oxidize formaldehyde. Also acts as a S-nitroso-glutathione reductase by catalyzing the NADH-dependent reduction of S-nitrosoglutathione, thereby regulating protein S-nitrosylation. In Schizosaccharomyces pombe (strain 972 / ATCC 24843) (Fission yeast), this protein is Probable S-(hydroxymethyl)glutathione dehydrogenase 1.